A 316-amino-acid chain; its full sequence is Beta-galactosidase small subunit (316 aa).

It belongs to the bacterial beta-galactosidase small subunit family. In terms of assembly, heterodimer of a large (LacL) and a small subunit (LacM).

The catalysed reaction is Hydrolysis of terminal non-reducing beta-D-galactose residues in beta-D-galactosides.. Functionally, component of a beta-galactosidase. The protein is Beta-galactosidase small subunit (lacM) of Lactobacillus acidophilus (strain ATCC 700396 / NCK56 / N2 / NCFM).